Consider the following 422-residue polypeptide: E3 ubiquitin-protein ligase CBLL2 (422 aa).

An RING-type zinc finger spans residues 54–94 (CDKCDLPIKIYGRIIPCKHAFCYNCANLYDKIGYKICPRCS). The HYB domain stretch occupies residues 93-151 (CSYPVLRIEEHKRGSVFMCSVVQGCKRTYLSQKSLQAHIKRRHKRARKQVASASLEKLR). The C2H2-type zinc finger occupies 109 to 135 (FMCSVVQGCKRTYLSQKSLQAHIKRRH). 2 disordered regions span residues 190–213 (MQQMPHEQHNQPHKDLQVPPPELS) and 378–422 (QTDA…HRPY). Positions 195–205 (HEQHNQPHKDL) are enriched in basic and acidic residues. Residues 393-405 (LPPPPPTWSPPPS) are compositionally biased toward pro residues. Basic residues predominate over residues 410–422 (GSHHSYQRRHRPY).

As to quaternary structure, homodimer.

It localises to the cytoplasm. It carries out the reaction S-ubiquitinyl-[E2 ubiquitin-conjugating enzyme]-L-cysteine + [acceptor protein]-L-lysine = [E2 ubiquitin-conjugating enzyme]-L-cysteine + N(6)-ubiquitinyl-[acceptor protein]-L-lysine.. It participates in protein modification; protein ubiquitination. E3 ubiquitin ligase catalyzing the covalent attachment of ubiquitin moieties onto substrate proteins. May operate on tyrosine-phosphorylated SRC substrates. In Macaca fascicularis (Crab-eating macaque), this protein is E3 ubiquitin-protein ligase CBLL2 (CBLL2).